Here is a 212-residue protein sequence, read N- to C-terminus: Soluble inorganic pyrophosphatase 1 (212 aa).

The substrate site is built by K62 and R76. Y84 functions as the Proton donor in the catalytic mechanism. Y88 provides a ligand contact to substrate. The Mg(2+) site is built by D98, D103, and D135. A substrate-binding site is contributed by Y172.

This sequence belongs to the PPase family. As to quaternary structure, monomer. It depends on Mg(2+) as a cofactor. In terms of tissue distribution, ubiquitous. Lower level of expression in ovary, stigma and pollen.

It localises to the cytoplasm. The enzyme catalyses diphosphate + H2O = 2 phosphate + H(+). Inhibited by Zn(2+), Ca(2+), Ba(2+), Fe(2+), Co(2+), Cu(2+), Eu(2+), Eu(3+) and Mn(2+). Functionally, catalyzes the irreversible hydrolysis of pyrophosphate (PPi) to phosphate. The MgPPi(2-) complex binds to the enzyme only after a free Mg(2+) ion has bound. No activity with glycerol-3-phosphate, glucose-6-phosphate, p-nitrophenylphosphate, ADP, NADP(+), NAD(+),NADH, NADPH or phosphoribosyl pyrophosphate as substrates. Controls the equilibrium of gluconeogenic reactions in the heterotrophic growth phase of early seedling establishment. Determinates the rate of cytosolic glycolysis, providing carbon for seed storage lipid accumulation. In Arabidopsis thaliana (Mouse-ear cress), this protein is Soluble inorganic pyrophosphatase 1.